Here is a 1074-residue protein sequence, read N- to C-terminus: Semaphorin-5A (1074 aa).

Positions 1–22 (MKGTCVIAWLFSSLGLWRLAHP) are cleaved as a signal peptide. Residues 23–968 (EAQGTTQCQR…EEKRCGEFNM (946 aa)) lie on the Extracellular side of the membrane. The Sema domain maps to 35–484 (HPVISYKEIG…LREHVVKIPL (450 aa)). Intrachain disulfides connect C104-C114 and C131-C140. Residues N142, N168, N227, and N277 are each glycosylated (N-linked (GlcNAc...) asparagine). 2 cysteine pairs are disulfide-bonded: C254–C357 and C278–C320. N323, N367, and N437 each carry an N-linked (GlcNAc...) asparagine glycan. Cystine bridges form between C487-C504 and C496-C513. N-linked (GlcNAc...) asparagine glycosylation is found at N536 and N591. TSP type-1 domains follow at residues 540–593 (DGHF…ANCS), 595–651 (NGGW…LLCP), 653–702 (HMFW…NPCP), 707–765 (TTPW…GCST), 784–839 (NGAW…LPCP), 841–896 (DGVW…QPCP), and 897–944 (ESWS…VFDS). Intrachain disulfides connect C607-C644, C611-C650, C622-C634, C665-C696, C669-C701, and C680-C686. An N-linked (GlcNAc...) asparagine glycan is attached at N717. Cystine bridges form between C796–C833, C800–C838, C811–C823, C853–C890, C857–C895, and C868–C880. The N-linked (GlcNAc...) asparagine glycan is linked to N933. Residues 969–989 (FHMIAVGLSSSILGCLLTLLV) traverse the membrane as a helical segment. Over 990–1074 (YTYCQRYQQQ…FTDLNNYDEY (85 aa)) the chain is Cytoplasmic.

It belongs to the semaphorin family. As to quaternary structure, binds PLXNB3.

It is found in the membrane. In terms of biological role, bifunctional axonal guidance cue regulated by sulfated proteoglycans; attractive effects result from interactions with heparan sulfate proteoglycans (HSPGs), while the inhibitory effects depend on interactions with chondroitin sulfate proteoglycans (CSPGs). Ligand for receptor PLXNB3. In glioma cells, SEMA5A stimulation of PLXNB3 results in the disassembly of F-actin stress fibers, disruption of focal adhesions and cellular collapse as well as inhibition of cell migration and invasion through ARHGDIA-mediated inactivation of RAC1. May promote angiogenesis by increasing endothelial cell proliferation and migration and inhibiting apoptosis. The protein is Semaphorin-5A (SEMA5A) of Homo sapiens (Human).